The sequence spans 311 residues: Probable manganese-dependent inorganic pyrophosphatase (311 aa).

His-9, Asp-13, Asp-15, Asp-77, His-99, and Asp-151 together coordinate Mn(2+).

Belongs to the PPase class C family. Mn(2+) serves as cofactor.

Its subcellular location is the cytoplasm. The enzyme catalyses diphosphate + H2O = 2 phosphate + H(+). This is Probable manganese-dependent inorganic pyrophosphatase from Streptococcus equi subsp. zooepidemicus (strain H70).